Consider the following 533-residue polypeptide: MLGLAGRCSAAAASAARPALRRAAGPSHGFLPLLLSRGAGPAAAVGARRDHAAQAAPAAKAGSATGRIVAVIGAVVDVQFDEGLPPILNALEVQGRETRLVLEVAQHLGENTVRTIAMDGTEGLVRGQKVLDSGAPIRIPVGPETLGRIMNVIGEPIDERGPITTKQFAAIHAEAPEFVEMSVEQKILVTGIKVVDLLAPYAKGGKIGLFGGAGVGKTVLIMELINNVAKAHGGYSVFAGVGERTREGNDLYHEMIESGVINLKDATSKVALVYGQMNEPPGARARVALTGLTVAEYFRDQEGQDVLLFIDNIFRFTQAGSEVSALLGRIPSAVGYQPTLATDMGTMQERITTTRKGSITSVQAIYVPADDLTDPAPATTFAHLDATTVLSRAIAELGIYPAVDPLDSTSRIMDPNIVGPEHYDVARGVQKILQDYKSLQDIIAILGMDELSEEDKLTVARARKIQRFLSQPFQVAEVFTGHMGKLVPLKETIKGFKQILAGEYDHLPEQAFYMVGPIEEAVAKAEKLAEEHA.

A mitochondrion-targeting transit peptide spans 1–53; the sequence is MLGLAGRCSAAAASAARPALRRAAGPSHGFLPLLLSRGAGPAAAVGARRDHAA. Residues Gly-214, Val-215, Gly-216, Lys-217, Thr-218, and Val-219 each contribute to the ADP site. Gly-214 is a binding site for ATP. Gly-214, Val-215, Gly-216, Lys-217, and Thr-218 together coordinate phosphate. Residues Gly-216, Lys-217, Thr-218, and Val-219 each contribute to the ATP site. Thr-218 is a Mg(2+) binding site. A Mg(2+)-binding site is contributed by Glu-243. Arg-244 is an ATP binding site.

Homotrimer. Component of the ATP synthase complex composed at least of ATP5F1A/subunit alpha, ATP5F1B/subunit beta, ATP5MC1/subunit c (homooctomer), MT-ATP6/subunit a, MT-ATP8/subunit 8, ATP5ME/subunit e, ATP5MF/subunit f, ATP5MG/subunit g, ATP5MK/subunit k, ATP5MJ/subunit j, ATP5F1C/subunit gamma, ATP5F1D/subunit delta, ATP5F1E/subunit epsilon, ATP5PF/subunit F6, ATP5PB/subunit b, ATP5PD/subunit d, ATP5PO/subunit OSCP. ATP synthase complex consists of a soluble F(1) head domain (subunits alpha(3) and beta(3)) - the catalytic core - and a membrane F(0) domain - the membrane proton channel (subunits c, a, 8, e, f, g, k and j). These two domains are linked by a central stalk (subunits gamma, delta, and epsilon) rotating inside the F1 region and a stationary peripheral stalk (subunits F6, b, d, and OSCP).

It is found in the mitochondrion inner membrane. The enzyme catalyses ATP + H2O + 4 H(+)(in) = ADP + phosphate + 5 H(+)(out). Catalytic subunit beta, of the mitochondrial membrane ATP synthase complex (F(1)F(0) ATP synthase or Complex V) that produces ATP from ADP in the presence of a proton gradient across the membrane which is generated by electron transport complexes of the respiratory chain. ATP synthase complex consist of a soluble F(1) head domain - the catalytic core - and a membrane F(1) domain - the membrane proton channel. These two domains are linked by a central stalk rotating inside the F(1) region and a stationary peripheral stalk. During catalysis, ATP synthesis in the catalytic domain of F(1) is coupled via a rotary mechanism of the central stalk subunits to proton translocation. In vivo, can only synthesize ATP although its ATP hydrolase activity can be activated artificially in vitro. With the subunit alpha (ATP5F1A), forms the catalytic core in the F(1) domain. The chain is ATP synthase F(1) complex catalytic subunit beta, mitochondrial from Gallus gallus (Chicken).